A 555-amino-acid polypeptide reads, in one-letter code: uncharacterized protein (555 aa).

ABC transporter domains are found at residues 4–244 (VKVK…PPYK) and 255–547 (IQVR…ARFM). ATP contacts are provided by residues 36–43 (GKSGAGKS) and 292–299 (GPSGVGKT).

The protein belongs to the ABC transporter superfamily.

This is an uncharacterized protein from Methanocaldococcus jannaschii (strain ATCC 43067 / DSM 2661 / JAL-1 / JCM 10045 / NBRC 100440) (Methanococcus jannaschii).